Reading from the N-terminus, the 358-residue chain is uncharacterized protein (358 aa).

The signal sequence occupies residues 1–15 (MITGKTISLPLSVIA). The N-palmitoyl cysteine moiety is linked to residue Cys16. Cys16 carries S-diacylglycerol cysteine lipidation. The segment at 331-358 (PCGTGSPGNPPPNINSVAQHRISTNTNR) is disordered. Residues 347 to 358 (VAQHRISTNTNR) are compositionally biased toward polar residues.

It is found in the cell membrane. This is an uncharacterized protein from Sinorhizobium fredii (strain NBRC 101917 / NGR234).